A 219-amino-acid polypeptide reads, in one-letter code: Envelope protein UL45 homolog (219 aa).

Topologically, residues 1–57 are intravirion; sequence MEDYKLLQLETATVDAQAPPLPTKTVPVFAPPLSTPPQPNELVYTKRRRTKRKAKCR. Residues 58 to 78 traverse the membrane as a helical; Signal-anchor for type II membrane protein segment; sequence CLFFTMGMFALGVLMTTAILV. Residues 79-219 are Virion surface-facing; sequence STFILTVPIG…RLDHIIPFPR (141 aa). N113, N120, and N138 each carry an N-linked (GlcNAc...) asparagine; by host glycan.

This sequence belongs to the herpesviridae HHV-1 UL45 family. N-glycosylated.

It is found in the virion membrane. The polypeptide is Envelope protein UL45 homolog (Equine herpesvirus 1 (strain Ab4p) (EHV-1)).